The following is a 206-amino-acid chain: Emopamil-binding protein-like (206 aa).

Helical transmembrane passes span 10–30 (EAGG…ALGL), 42–62 (GALI…GPFV), 101–121 (VEIL…YAIV), and 165–185 (CWLY…LLLW). Residues 39-184 (ADRGALIWLC…VWVLIPGLLL (146 aa)) enclose the EXPERA domain.

The protein belongs to the EBP family. In terms of assembly, homodimer. As to expression, widely expressed with highest levels in liver, lung and kidney.

It is found in the endoplasmic reticulum membrane. In terms of biological role, does not possess sterol isomerase activity and does not bind sigma ligands. The protein is Emopamil-binding protein-like (EBPL) of Homo sapiens (Human).